Reading from the N-terminus, the 153-residue chain is Mitotic-spindle organizing protein 2 (153 aa).

Residues K80–N153 are disordered. 2 stretches are compositionally biased toward polar residues: residues V81–P99 and K107–R133. Positions G134–N153 are enriched in low complexity.

Belongs to the MOZART2 family. Part of the gamma-tubulin complex. Interacts with TUBG1.

It localises to the cytoplasm. The protein resides in the cytoskeleton. The protein localises to the microtubule organizing center. Its subcellular location is the centrosome. It is found in the spindle. The protein is Mitotic-spindle organizing protein 2 (mzt2) of Danio rerio (Zebrafish).